Consider the following 193-residue polypeptide: dTTP/UTP pyrophosphatase (193 aa).

Catalysis depends on Asp-77, which acts as the Proton acceptor.

The protein belongs to the Maf family. YhdE subfamily. A divalent metal cation is required as a cofactor.

It localises to the cytoplasm. It catalyses the reaction dTTP + H2O = dTMP + diphosphate + H(+). The catalysed reaction is UTP + H2O = UMP + diphosphate + H(+). In terms of biological role, nucleoside triphosphate pyrophosphatase that hydrolyzes dTTP and UTP. May have a dual role in cell division arrest and in preventing the incorporation of modified nucleotides into cellular nucleic acids. This is dTTP/UTP pyrophosphatase from Parabacteroides distasonis (strain ATCC 8503 / DSM 20701 / CIP 104284 / JCM 5825 / NCTC 11152).